Reading from the N-terminus, the 597-residue chain is Dictomallein-3 (597 aa).

The signal sequence occupies residues 1–19; sequence MKLILILIFLFSCILFINC. Residues 148–409 enclose the Peptidase M66 domain; that stretch reads PDVGQDYTLK…QNYFKNSIYY (262 aa). His-301 contributes to the Zn(2+) binding site. The active site involves Glu-302. Residues His-305 and His-311 each contribute to the Zn(2+) site.

It belongs to the dictomallein family. It depends on Zn(2+) as a cofactor.

It is found in the secreted. The sequence is that of Dictomallein-3 (dtmlC) from Dictyostelium discoideum (Social amoeba).